The following is a 195-amino-acid chain: Imidazoleglycerol-phosphate dehydratase (195 aa).

Belongs to the imidazoleglycerol-phosphate dehydratase family.

It is found in the cytoplasm. It carries out the reaction D-erythro-1-(imidazol-4-yl)glycerol 3-phosphate = 3-(imidazol-4-yl)-2-oxopropyl phosphate + H2O. It participates in amino-acid biosynthesis; L-histidine biosynthesis; L-histidine from 5-phospho-alpha-D-ribose 1-diphosphate: step 6/9. The protein is Imidazoleglycerol-phosphate dehydratase of Bordetella avium (strain 197N).